Here is a 566-residue protein sequence, read N- to C-terminus: MPKVEIYKNLFLDKIGKNFTNLEISELLEPFKAEFDGFDENSGKIKIEFNDTNRPDLWSYTGLARQIKTYLFGEIPYYDFFSKKGDFKKCYGEILVDNKMSQIRPFIFGFLAKGLIINDRMLEALIQFQEKLCQSYGQKRRRVAMGMYNSNFIKFPISYVASSPNHKFVPLGMDCELSLLEINEKHPKGLEYSYIVKNFDKYPLLLDNNNNVVSYPPIINSNNIGSLKVGDTELFVEVTGIDFEATLLALSIVACDFYDMGFEILPVKTVFKDPFGLDFEELVCPYYFQEEVEFDVKNVNRLLGNNLTLERICLNLKKMGVSSYSRDFKNYIVPPFYRNDFLHEVDVIEDVMIGEGLASFYPELPKAFTIGRLSALEEFSRNVRNLMMGMGFQEMIYNYMGSRKDFIDRMNINDQNFLKVSNPMTENYEYIRASIIPNLLKSESVSSNFPYPHKIFEVGKVALKNLDAAEGTSTFTNLAFLMSGKEISFNEINSIVATLFYYLNIEIILRESKATFYINGRGADILIEGFNVGSFGEISPYVLNNFGIFIPCSVFEVNINKLVSQS.

The B5 domain occupies 287–362; it reads YFQEEVEFDV…IGEGLASFYP (76 aa). 4 residues coordinate Mg(2+): D340, D346, E349, and D350.

The protein belongs to the phenylalanyl-tRNA synthetase beta subunit family. Type 2 subfamily. As to quaternary structure, tetramer of two alpha and two beta subunits. Mg(2+) serves as cofactor.

Its subcellular location is the cytoplasm. The catalysed reaction is tRNA(Phe) + L-phenylalanine + ATP = L-phenylalanyl-tRNA(Phe) + AMP + diphosphate + H(+). The protein is Phenylalanine--tRNA ligase beta subunit of Borrelia garinii subsp. bavariensis (strain ATCC BAA-2496 / DSM 23469 / PBi) (Borreliella bavariensis).